Consider the following 83-residue polypeptide: Small proline-rich protein 2A3 (83 aa).

5 repeat units span residues 21 to 29, 30 to 38, 39 to 47, 48 to 56, and 57 to 65. Positions 21 to 65 are 5 X 9 AA approximate tandem repeats; it reads PKCPEPCPPQVWPGPCRPVMCFEPCLPSVWPGPCRPVVCYEQCPP.

The protein belongs to the cornifin (SPRR) family. Forms five pairs of intrachain disulfide bonds.

Its subcellular location is the secreted. The protein localises to the extracellular space. It localises to the cytoplasmic vesicle. It is found in the secretory vesicle. Its function is as follows. Gut bactericidal protein that selectively kills Gram-positive bacteria by binding to negatively charged lipids on bacterial membranes, leading to bacterial membrane permeabilization and disruption. Specifically binds lipids bearing negatively charged headgroups, such as phosphatidic acid, phosphatidylserine (PS), cardiolipin (CL), and phosphatidylinositol phosphates, but not to zwitterionic or neutral lipids. Induced by type-2 cytokines in response to helminth infection and is required to protect against helminth-induced bacterial invasion of intestinal tissue. May also be involved in the development of the cornified envelope of squamous epithelia; however, additional evidences are required to confirm this result in vivo. The polypeptide is Small proline-rich protein 2A3 (Mus musculus (Mouse)).